We begin with the raw amino-acid sequence, 261 residues long: Uridine-cytidine kinase 2 (261 aa).

A compositionally biased stretch (polar residues) spans 1-16 (MAGDSEQTLQNHQQPN). The disordered stretch occupies residues 1–24 (MAGDSEQTLQNHQQPNGGEPFLIG). Residue Ala-2 is modified to N-acetylalanine. ATP is bound at residue 27-35 (GGTASGKSS). Residues Asp-84, Tyr-112, His-117, Arg-166, Arg-176, and Gln-184 each contribute to the substrate site. Residue Asp-213 coordinates ATP. The disordered stretch occupies residues 236–261 (RQTNGCLNGYTPSRKRQASESSSRPH). Ser-254 carries the phosphoserine modification.

Belongs to the uridine kinase family. In terms of assembly, homotetramer. As to expression, according to PubMed:8812458; testis-specific. According to PubMed:11306702, placenta-specific.

The catalysed reaction is uridine + ATP = UMP + ADP + H(+). It carries out the reaction cytidine + ATP = CMP + ADP + H(+). Its pathway is pyrimidine metabolism; CTP biosynthesis via salvage pathway; CTP from cytidine: step 1/3. It participates in pyrimidine metabolism; UMP biosynthesis via salvage pathway; UMP from uridine: step 1/1. Its function is as follows. Phosphorylates uridine and cytidine to uridine monophosphate and cytidine monophosphate. Does not phosphorylate deoxyribonucleosides or purine ribonucleosides. Can use ATP or GTP as a phosphate donor. Can also phosphorylate cytidine and uridine nucleoside analogs such as 6-azauridine, 5-fluorouridine, 4-thiouridine, 5-bromouridine, N(4)-acetylcytidine, N(4)-benzoylcytidine, 5-fluorocytidine, 2-thiocytidine, 5-methylcytidine, and N(4)-anisoylcytidine. This Homo sapiens (Human) protein is Uridine-cytidine kinase 2 (UCK2).